Consider the following 483-residue polypeptide: 6-phosphogluconate dehydrogenase, decarboxylating (483 aa).

NADP(+)-binding positions include 10-15 (GLAVMG) and 33-35 (NRT). Lysine 38 carries the post-translational modification N6-acetyllysine. Serine 57 bears the Phosphoserine mark. NADP(+)-binding positions include 75–77 (VKA) and asparagine 103. Substrate contacts are provided by asparagine 103, serine 129, and glycine 131. Position 129 is a phosphoserine (serine 129). Residue lysine 184 is the Proton acceptor of the active site. 187–188 (HN) lines the substrate pocket. Glutamate 191 serves as the catalytic Proton donor. Substrate-binding residues include tyrosine 192, lysine 261, arginine 288, arginine 447, and histidine 453. 478–481 (SSSY) provides a ligand contact to NADP(+).

Belongs to the 6-phosphogluconate dehydrogenase family. Homodimer.

Its subcellular location is the cytoplasm. It carries out the reaction 6-phospho-D-gluconate + NADP(+) = D-ribulose 5-phosphate + CO2 + NADPH. The protein operates within carbohydrate degradation; pentose phosphate pathway; D-ribulose 5-phosphate from D-glucose 6-phosphate (oxidative stage): step 3/3. Catalyzes the oxidative decarboxylation of 6-phosphogluconate to ribulose 5-phosphate and CO(2), with concomitant reduction of NADP to NADPH. This is 6-phosphogluconate dehydrogenase, decarboxylating (PGD) from Ovis aries (Sheep).